The following is a 431-amino-acid chain: Adenylosuccinate synthetase (431 aa).

GTP is bound by residues 12–18 (GDEGKGK) and 40–42 (GHT). The active-site Proton acceptor is Asp13. Mg(2+) contacts are provided by Asp13 and Gly40. IMP is bound by residues 13–16 (DEGK), 38–41 (NAGH), Thr130, Arg144, Gln225, Thr240, and Arg304. His41 functions as the Proton donor in the catalytic mechanism. Substrate is bound at residue 300–306 (ATTGRPR). GTP contacts are provided by residues Arg306, 332-334 (KLD), and 414-416 (SVG).

Belongs to the adenylosuccinate synthetase family. Homodimer. Requires Mg(2+) as cofactor.

Its subcellular location is the cytoplasm. It catalyses the reaction IMP + L-aspartate + GTP = N(6)-(1,2-dicarboxyethyl)-AMP + GDP + phosphate + 2 H(+). It participates in purine metabolism; AMP biosynthesis via de novo pathway; AMP from IMP: step 1/2. Plays an important role in the de novo pathway of purine nucleotide biosynthesis. Catalyzes the first committed step in the biosynthesis of AMP from IMP. The protein is Adenylosuccinate synthetase of Geotalea daltonii (strain DSM 22248 / JCM 15807 / FRC-32) (Geobacter daltonii).